Here is a 165-residue protein sequence, read N- to C-terminus: Acireductone dioxygenase (165 aa).

Fe(2+) contacts are provided by His90, His92, Glu96, and His134. Ni(2+) contacts are provided by His90, His92, Glu96, and His134.

It belongs to the acireductone dioxygenase (ARD) family. In terms of assembly, monomer. Fe(2+) is required as a cofactor. Ni(2+) serves as cofactor.

The catalysed reaction is 1,2-dihydroxy-5-(methylsulfanyl)pent-1-en-3-one + O2 = 3-(methylsulfanyl)propanoate + CO + formate + 2 H(+). The enzyme catalyses 1,2-dihydroxy-5-(methylsulfanyl)pent-1-en-3-one + O2 = 4-methylsulfanyl-2-oxobutanoate + formate + 2 H(+). It participates in amino-acid biosynthesis; L-methionine biosynthesis via salvage pathway; L-methionine from S-methyl-5-thio-alpha-D-ribose 1-phosphate: step 5/6. In terms of biological role, catalyzes 2 different reactions between oxygen and the acireductone 1,2-dihydroxy-3-keto-5-methylthiopentene (DHK-MTPene) depending upon the metal bound in the active site. Fe-containing acireductone dioxygenase (Fe-ARD) produces formate and 2-keto-4-methylthiobutyrate (KMTB), the alpha-ketoacid precursor of methionine in the methionine recycle pathway. Ni-containing acireductone dioxygenase (Ni-ARD) produces methylthiopropionate, carbon monoxide and formate, and does not lie on the methionine recycle pathway. This chain is Acireductone dioxygenase, found in Rhodopseudomonas palustris (strain TIE-1).